The following is a 3075-amino-acid chain: Laminin subunit alpha-1 (3075 aa).

The N-terminal stretch at 1 to 17 (MRGGVLLVLLLCVAAQC) is a signal peptide. The Laminin N-terminal domain maps to 18-269 (RQRGLFPAIL…SIKDISVGGM (252 aa)). Disulfide bonds link Cys270-Cys279, Cys272-Cys290, Cys292-Cys301, Cys304-Cys324, Cys327-Cys336, Cys329-Cys361, Cys364-Cys373, Cys376-Cys394, Cys397-Cys409, Cys399-Cys427, Cys429-Cys438, Cys441-Cys451, Cys454-Cys467, Cys456-Cys471, Cys473-Cys482, and Cys485-Cys500. Laminin EGF-like domains follow at residues 270–326 (CICY…TCEA), 327–396 (CNCH…PCRP), 397–453 (CNCD…TCVS), and 454–502 (CGCN…GCSE). The 10-residue stretch at 503–512 (CFCFGVSDVC) folds into the Laminin EGF-like 5; first part domain. The Laminin IV type A 1 domain occupies 516–708 (SWPVGQVNSM…DLVVAADVEH (193 aa)). The N-linked (GlcNAc...) asparagine glycan is linked to Asn665. Residues 709–741 (CECPQGYTGTSCESCLSGYYRVDGILFGGICQP) enclose the Laminin EGF-like 5; second part domain. Intrachain disulfides connect Cys742–Cys751, Cys744–Cys757, Cys760–Cys769, Cys772–Cys788, Cys791–Cys806, Cys793–Cys816, Cys819–Cys828, Cys831–Cys846, Cys849–Cys863, Cys851–Cys870, Cys873–Cys882, Cys885–Cys899, Cys902–Cys914, Cys904–Cys921, Cys923–Cys932, Cys935–Cys948, Cys951–Cys963, Cys953–Cys969, Cys971–Cys980, Cys983–Cys995, Cys998–Cys1007, Cys1000–Cys1014, Cys1016–Cys1025, Cys1028–Cys1041, Cys1044–Cys1056, Cys1046–Cys1063, Cys1065–Cys1074, Cys1077–Cys1087, Cys1090–Cys1102, Cys1092–Cys1118, Cys1120–Cys1129, and Cys1132–Cys1147. Laminin EGF-like domains follow at residues 742-790 (CECH…DCQP), 791-848 (CACP…SCVP), 849-901 (CDCS…NCRA), 902-950 (CECH…GCRP), 951-997 (CNCS…SCTP), 998-1043 (CDCP…GCQA), 1044-1089 (CNCS…DCVP), and 1090-1149 (CDCD…GCSP). The Laminin EGF-like 14; first part domain occupies 1150 to 1159 (CFCSGLSHLC). The region spanning 1170-1361 (VTLGSDQPLL…EEEVASLLEN (192 aa)) is the Laminin IV type A 2 domain. The 41-residue stretch at 1362 to 1402 (CVCPPGTVGFSCQDCAPGYHRGKLPAGSDRGPRPLVAPCVP) folds into the Laminin EGF-like 14; second part domain. 12 disulfides stabilise this stretch: Cys1403–Cys1412, Cys1405–Cys1419, Cys1422–Cys1431, Cys1434–Cys1449, Cys1452–Cys1466, Cys1454–Cys1476, Cys1479–Cys1488, Cys1491–Cys1506, Cys1509–Cys1521, Cys1511–Cys1528, Cys1530–Cys1539, and Cys1542–Cys1553. 3 consecutive Laminin EGF-like domains span residues 1403 to 1451 (CSCN…DCAL), 1452 to 1508 (CACP…SCQK), and 1509 to 1555 (CDCN…DCVS). Positions 1556–2116 (CDDECVGVLL…SQARKQAASI (561 aa)) are domain II and I. N-linked (GlcNAc...) asparagine glycans are attached at residues Asn1579, Asn1689, Asn1717, Asn2047, and Asn2243. Positions 1706–1783 (MQIRDFTQLH…KMQESNHLLL (78 aa)) form a coiled coil. 5 Laminin G-like domains span residues 2117-2297 (KVAV…CRGC), 2305-2481 (DPSF…RKGC), 2486-2673 (IRSV…LDTC), 2713-2885 (AHQF…VNRC), and 2890-3070 (QEGT…LHSC). 2 disulfides stabilise this stretch: Cys2271/Cys2297 and Cys2457/Cys2481. The Cell attachment site motif lies at 2534 to 2536 (RGD). Cystine bridges form between Cys2646–Cys2673, Cys2860–Cys2885, and Cys3039–Cys3070.

In terms of assembly, laminin is a complex glycoprotein, consisting of three different polypeptide chains (alpha, beta, gamma), which are bound to each other by disulfide bonds into a cross-shaped molecule comprising one long and three short arms with globules at each end. Alpha-1 is a subunit of laminin-1 (laminin-111 or EHS laminin) and laminin-3 (laminin-121 or S-laminin). Post-translationally, tyrosine phosphorylated by PKDCC/VLK.

Its subcellular location is the secreted. It localises to the extracellular space. It is found in the extracellular matrix. The protein resides in the basement membrane. Its function is as follows. Binding to cells via a high affinity receptor, laminin is thought to mediate the attachment, migration and organization of cells into tissues during embryonic development by interacting with other extracellular matrix components. In Homo sapiens (Human), this protein is Laminin subunit alpha-1 (LAMA1).